A 184-amino-acid polypeptide reads, in one-letter code: Protein GrpE (184 aa).

Over residues methionine 1–asparagine 12 the composition is skewed to basic and acidic residues. The tract at residues methionine 1–glycine 22 is disordered.

It belongs to the GrpE family. Homodimer.

It localises to the cytoplasm. Functionally, participates actively in the response to hyperosmotic and heat shock by preventing the aggregation of stress-denatured proteins, in association with DnaK and GrpE. It is the nucleotide exchange factor for DnaK and may function as a thermosensor. Unfolded proteins bind initially to DnaJ; upon interaction with the DnaJ-bound protein, DnaK hydrolyzes its bound ATP, resulting in the formation of a stable complex. GrpE releases ADP from DnaK; ATP binding to DnaK triggers the release of the substrate protein, thus completing the reaction cycle. Several rounds of ATP-dependent interactions between DnaJ, DnaK and GrpE are required for fully efficient folding. The chain is Protein GrpE from Pseudomonas putida (strain W619).